The sequence spans 1028 residues: MGNLESAEGVPGEPPSVPLLLPPGKMPMPEPCELEERFALVLSSMNLPPDKARLLRQYDNEKKWDLICDQERFQVKNPPHTYIQKLQSFLDPSVTRKKFRRRVQESTKVLRELEISLRTNHIGWVREFLNDENKGLDVLVDYLSFAQCSVMFDFEGLESGDDGAFDKLRSWSRSIEDLQPPSALSAPFTNSLARSARQSVLRYSTLPGRRALKNSRLVSQKDDVHVCILCLRAIMNYQYGFNLVMSHPHAVNEIALSLNNKNPRTKALVLELLAAVCLVRGGHEIILAAFDNFKEVCKELHRFEKLMEYFRNEDSNIDFMVACMQFINIVVHSVEDMNFRVHLQYEFTKLGLEEFLQKSRHTESEKLQVQIQAYLDNVFDVGGLLEDAETKNVALEKVEELEEHVSHLTEKLLDLENENMMRVAELEKQLLQREKELESIKETYENTSHQVHTLRRLIKEKEEAFQRRCHLEPNVRGLESVDSEALARVGPAELSEGMPPSDLDLLAPAPPPEEVLPLPPPPAPPLPPPPPPLPDKCPPAPPLPGAAPSVVLTVGLSAIRIKKPIKTKFRLPVFNWTALKPNQISGTVFSELDDEKILEDLDLDKFEELFKTKAQGPALDLICSKNKTAQKAASKVTLLEANRAKNLAITLRKAGRSAEEICRAIHTFDLQTLPVDFVECLMRFLPTEAEVKLLRQYERERQPLEELAAEDRFMLLFSKVERLTQRMAGMAFLGNFQDNLQMLTPQLNAIIAASASVKSSQKLKQMLEIILALGNYMNSSKRGAVYGFKLQSLDLLLDTKSTDRKMTLLHFIALTVKEKYPDLANFWHELHFVEKAAAVSLENVLLDVKELGRGMELIRRECSIHDNSVLRNFLSTNEGKLDKLQRDAKTAEEAYNAVVRYFGESPKTTPPSVFFPVFVRFIRSYKEAEQENEARKKQEEVMREKQLAQEAKKLDAKTPSQRNKWQQQELIAELRRRQAKEHRPVYEGKDGTIEDIITVLKSVPFTARTAKRGSRFFCDAAHHDESNC.

A lipid anchor (N-myristoyl glycine) is attached at G2. A GBD/FH3 domain is found at 26–472; that stretch reads MPMPEPCELE…EAFQRRCHLE (447 aa). At T95 the chain carries Phosphothreonine. Position 174 is a phosphoserine (S174). A disordered region spans residues 493-541; it reads ELSEGMPPSDLDLLAPAPPPEEVLPLPPPPAPPLPPPPPPLPDKCPPAP. Residues 508 to 541 are compositionally biased toward pro residues; it reads PAPPPEEVLPLPPPPAPPLPPPPPPLPDKCPPAP. Positions 561-951 constitute an FH2 domain; it reads IKKPIKTKFR…MREKQLAQEA (391 aa). Residues 986 to 1018 enclose the DAD domain; that stretch reads YEGKDGTIEDIITVLKSVPFTARTAKRGSRFFC. The residue at position 1014 (S1014) is a Phosphoserine.

Belongs to the formin homology family. Interacts with SRGAP2 (via SH3 domain). As to expression, expressed in endothelial cells.

It localises to the cytoplasm. Its subcellular location is the cell membrane. Functionally, plays a role in the regulation of cell morphology and cytoskeletal organization. Required in the control of cell shape and migration. Required for developmental angiogenesis. In this process, required for microtubule reorganization and for efficient endothelial cell elongation. In quiescent endothelial cells, triggers rearrangement of the actin cytoskeleton, but does not alter microtubule alignement. This Homo sapiens (Human) protein is Formin-like protein 3 (FMNL3).